A 307-amino-acid chain; its full sequence is Mitochondrial brown fat uncoupling protein 1 (307 aa).

Topologically, residues 2-10 (VNPTTSEVH) are mitochondrial intermembrane. The helical transmembrane segment at 11–32 (PTMGVKIFSAGVAACLADIITF) threads the bilayer. Solcar repeat units follow at residues 11–102 (PTMG…VQEY), 111–201 (PTLG…MKGA), and 210–295 (DDVP…LKKE). Residues 33–73 (PLDTAKVRLQIQGEGQISSTIRYKGVLGTITTLAKTEGLPK) lie on the Mitochondrial matrix side of the membrane. Lys-56 lines the fatty acid 16:0 pocket. A helical transmembrane segment spans residues 74 to 96 (LYSGLPAGIQRQISFASLRIGLY). Residues 97 to 116 (DTVQEYFSSGKETPPTLGNR) are Mitochondrial intermembrane-facing. The chain crosses the membrane as a helical span at residues 117–133 (ISAGLMTGGVAVFIGQP). Topologically, residues 134–178 (TEVVKVRLQAQSHLHGIKPRYTGTYNAYRIIATTESFSTLWKGTT) are mitochondrial matrix. Residues 179–195 (PNLLRNVIINCVELVTY) form a helical membrane-spanning segment. Topologically, residues 196–212 (DLMKGALVNNQILADDV) are mitochondrial intermembrane. The chain crosses the membrane as a helical span at residues 213–232 (PCHLLSAFVAGFCTTFLASP). Over 233-266 (ADVVKTRFINSLPGQYPSVPSCAMTMLTKEGPTA) the chain is Mitochondrial matrix. At Cys-254 the chain carries Cysteine sulfenic acid (-SOH). Residues 267 to 289 (FFKGFVPSFLRLASWNVIMFVCF) form a helical membrane-spanning segment. Residue Lys-269 coordinates fatty acid 16:0. Over 290–307 (EQLKKELSKSRQTVDCTT) the chain is Mitochondrial intermembrane.

Belongs to the mitochondrial carrier (TC 2.A.29) family. Most probably functions as a monomer. Binds one purine nucleotide per monomer. However, has also been suggested to function as a homodimer or a homotetramer. Tightly associates with cardiolipin in the mitochondrion inner membrane; may stabilize and regulate its activity. In terms of processing, may undergo sulfenylation upon cold exposure. May increase the sensitivity of UCP1 thermogenic function to the activation by noradrenaline probably through structural effects. May undergo ubiquitin-mediated proteasomal degradation. In terms of tissue distribution, brown adipose tissue.

The protein resides in the mitochondrion inner membrane. It catalyses the reaction H(+)(in) = H(+)(out). Has no constitutive proton transporter activity and has to be activated by long-chain fatty acids/LCFAs. Inhibited by purine nucleotides. Both purine nucleotides and LCFAs bind the cytosolic side of the transporter and directly compete to activate or inhibit it. Activated by noradrenaline and reactive oxygen species. Despite lacking canonical translational encoding for selenocysteine, a small pool of the protein has been observed to selectively incorporate selenocysteine at 'Cys-254'. Selenocysteine-modified protein is highly sensitive to redox modification and may constitute a pool of protein highly sensitive to activation by elevated levels of reactive oxygen species (ROS). Its function is as follows. Mitochondrial protein responsible for thermogenic respiration, a specialized capacity of brown adipose tissue and beige fat that participates in non-shivering adaptive thermogenesis to temperature and diet variations and more generally to the regulation of energy balance. Functions as a long-chain fatty acid/LCFA and proton symporter, simultaneously transporting one LCFA and one proton through the inner mitochondrial membrane. However, LCFAs remaining associated with the transporter via their hydrophobic tails, it results in an apparent transport of protons activated by LCFAs. Thereby, dissipates the mitochondrial proton gradient and converts the energy of substrate oxydation into heat instead of ATP. Regulates the production of reactive oxygen species/ROS by mitochondria. The sequence is that of Mitochondrial brown fat uncoupling protein 1 from Mesocricetus auratus (Golden hamster).